The primary structure comprises 555 residues: Urocanate hydratase (555 aa).

NAD(+) contacts are provided by residues 51–52 (GG), Gln129, 175–177 (GMG), Glu195, 262–266 (QTSAH), 272–273 (YL), and Tyr321. Residue Cys409 is part of the active site. NAD(+) is bound at residue Gly491.

This sequence belongs to the urocanase family. NAD(+) serves as cofactor.

The protein resides in the cytoplasm. It catalyses the reaction 4-imidazolone-5-propanoate = trans-urocanate + H2O. The protein operates within amino-acid degradation; L-histidine degradation into L-glutamate; N-formimidoyl-L-glutamate from L-histidine: step 2/3. Catalyzes the conversion of urocanate to 4-imidazolone-5-propionate. The protein is Urocanate hydratase of Stenotrophomonas maltophilia (strain R551-3).